The primary structure comprises 1217 residues: MAAGRAQVPSSEQAWLEDAQVFIQKTLCPAVKEPNVQLTPLVIDCVKTVWLSQGRNQGSTLPLSYSFVSVQDLKTHQRLPCCSHLSWSSSAYQAWAQEAGPNGNPLPREQLLLLGTLTDLSADLEQECRNGSLYVRDNTGVLSCELIDLDLSWLGHLFLFPRWSYLPPARWNSSGEGHLELWDAPVPVFPLTISPGPVTPIPVLYPESASCLLRLRNKLRGVQRNLAGSLVRLSALVKSKQKAYFILSLGRSHPAVTHVSIIVQVPAQLVWHRALRPGTAYVLTELRVSKIRGQRQHVWMTSQSSRLLLLKPECVQELELELEGPLLEADPKPLPMPSNSEDKKDPESLVRYSRLLSYSGAVTGVLNEPAGLYELDGQLGLCLAYQQFRGLRRVMRPGVCLQLQDVHLLQSVGGGTRRPVLAPCLRGAVLLQSFSRQKPGAHSSRQAYGASLYEQLVWERQLGLPLYLWATKALEELACKLCPHVLRHHQFLQHSSPGSPSLGLQLLAPTLDLLAPPGSPVRNAHNEILEEPHHCPLQKYTRLQTPSSFPTLATLKEEGQRKAWASFDPKALLPLPEASYLPSCQLNRRLAWSWLCLLPSAFCPAQVLLGVLVASSHKGCLQLRDQSGSLPCLLLAKHSQPLSDPRLIGCLVRAERFQLIVERDVRSSFPSWKELSMPGFIQKQQARVYVQFFLADALILPVPRPCLHSATPSTPQTDPTGPEGPHLGQSRLFLLCHKEALMKRNFCVPPGASPEVPKPALSFYVLGSWLGGTQRKEGTGWGLPEPQGNDDNDQKVHLIFFGSSVRWFEFLHPGQVYRLIAPGPATPMLFEKDGSSCISRRPLELAGCASCLTVQDNWTLELESSQDIQDVLDANKSLPESSLTDLLSDNFTDSLVSFSAEILSRTLCEPLVASLWMKLGNTGAMRRCVKLTVALETAECEFPPHLDVYIEDPHLPPSLGLLPGARVHFSQLEKRVSRSHNVYCCFRSSTYVQVLSFPPETTISIPLPHIYLAELLQGGQSPFQATASCHIVSVFSLQLFWVCAYCTSICRQGKCTRLGSTCPTQTAISQAIIRLLVEDGTAEAVVTCRNHHVAAALGLCPREWASLLDFVQVPGRVVLQFAGPGAQLESSARVDEPMTMFLWTLCTSPSVLRPIVLSFELERKPSKIVPLEPPRLQRFQCGELPFLTHVNPRLRLSCLSIRESEYSSSLGILASSC.

A disordered region spans residues 328-347 (EADPKPLPMPSNSEDKKDPE).

Belongs to the CTC1 family. As to quaternary structure, component of the CST complex, composed of TEN1/C17orf106, CTC1/C17orf68 and STN1; in the complex interacts directly with STN1. Interacts with ACD and POT1.

It localises to the nucleus. The protein localises to the chromosome. It is found in the telomere. Its function is as follows. Component of the CST complex proposed to act as a specialized replication factor promoting DNA replication under conditions of replication stress or natural replication barriers such as the telomere duplex. The CST complex binds single-stranded DNA with high affinity in a sequence-independent manner, while isolated subunits bind DNA with low affinity by themselves. Initially the CST complex has been proposed to protect telomeres from DNA degradation. However, the CST complex has been shown to be involved in several aspects of telomere replication. The CST complex inhibits telomerase and is involved in telomere length homeostasis; it is proposed to bind to newly telomerase-synthesized 3' overhangs and to terminate telomerase action implicating the association with the ACD:POT1 complex thus interfering with its telomerase stimulation activity. The CST complex is also proposed to be involved in fill-in synthesis of the telomeric C-strand probably implicating recruitment and activation of DNA polymerase alpha. The CST complex facilitates recovery from many forms of exogenous DNA damage; seems to be involved in the re-initiation of DNA replication at repaired forks and/or dormant origins. Involved in telomere maintenance. Involved in genome stability. May be in involved in telomeric C-strand fill-in during late S/G2 phase. The polypeptide is CST complex subunit CTC1 (CTC1) (Homo sapiens (Human)).